Here is a 280-residue protein sequence, read N- to C-terminus: Probable endonuclease 4 (280 aa).

Residues His-69, His-109, Glu-145, Asp-179, His-182, His-216, Asp-229, His-231, and Glu-261 each contribute to the Zn(2+) site.

The protein belongs to the AP endonuclease 2 family. The cofactor is Zn(2+).

The catalysed reaction is Endonucleolytic cleavage to 5'-phosphooligonucleotide end-products.. Endonuclease IV plays a role in DNA repair. It cleaves phosphodiester bonds at apurinic or apyrimidinic (AP) sites, generating a 3'-hydroxyl group and a 5'-terminal sugar phosphate. The polypeptide is Probable endonuclease 4 (Pelodictyon phaeoclathratiforme (strain DSM 5477 / BU-1)).